We begin with the raw amino-acid sequence, 466 residues long: Ribulose bisphosphate carboxylase large chain (466 aa).

At K4 the chain carries N6,N6,N6-trimethyllysine. N113 and T163 together coordinate substrate. K165 functions as the Proton acceptor in the catalytic mechanism. K167 lines the substrate pocket. Residues K191, D193, and E194 each coordinate Mg(2+). K191 carries the N6-carboxylysine modification. Residue H284 is the Proton acceptor of the active site. Substrate-binding residues include R285, H317, and S369.

Belongs to the RuBisCO large chain family. Type I subfamily. As to quaternary structure, heterohexadecamer of 8 large chains and 8 small chains; disulfide-linked. The disulfide link is formed within the large subunit homodimers. It depends on Mg(2+) as a cofactor. Post-translationally, the disulfide bond which can form in the large chain dimeric partners within the hexadecamer appears to be associated with oxidative stress and protein turnover.

It is found in the plastid. The protein localises to the chloroplast. The enzyme catalyses 2 (2R)-3-phosphoglycerate + 2 H(+) = D-ribulose 1,5-bisphosphate + CO2 + H2O. The catalysed reaction is D-ribulose 1,5-bisphosphate + O2 = 2-phosphoglycolate + (2R)-3-phosphoglycerate + 2 H(+). In terms of biological role, ruBisCO catalyzes two reactions: the carboxylation of D-ribulose 1,5-bisphosphate, the primary event in carbon dioxide fixation, as well as the oxidative fragmentation of the pentose substrate in the photorespiration process. Both reactions occur simultaneously and in competition at the same active site. The chain is Ribulose bisphosphate carboxylase large chain from Nelsonia canescens (Blue pussyleaf).